The primary structure comprises 250 residues: Low affinity immunoglobulin gamma Fc region receptor III-A (250 aa).

A signal peptide spans 1–20 (MWRLLSPTALLLLVSAGTRA). Over 21–207 (ADLSKAMVVL…TSTFLPHWYQ (187 aa)) the chain is Extracellular. Ig-like C2-type domains follow at residues 32 to 105 (PEWN…LEVH) and 120 to 189 (EGDT…VNIT). Cystine bridges form between C47–C89 and C128–C172. Residues N63, N133, N180, and N187 are each glycosylated (N-linked (GlcNAc...) asparagine). Residues 208 to 228 (IAFFLVTALLFVVDTGLHVAV) traverse the membrane as a helical segment. At 229–250 (QRDLQSSVKEWKDGKVTWSHGP) the chain is on the cytoplasmic side.

As to quaternary structure, forms a heterooligomeric complex with ITAM-containing signaling subunits FCER1G. Interacts (via transmembrane domain) with signaling subunits; this interaction is a prerequisite for receptor complex expression on the cell surface and intracellular signal transduction. Binds the Fc region of antigen-complexed IgG.

Its subcellular location is the cell membrane. In terms of biological role, receptor for the invariable Fc fragment of immunoglobulin gamma (IgG). Optimally activated upon binding of clustered antigen-IgG complexes displayed on cell surfaces, triggers lysis of antibody-coated cells, a process known as antibody-dependent cellular cytotoxicity (ADCC). Does not bind free monomeric IgG, thus avoiding inappropriate effector cell activation in the absence of antigenic trigger. Mediates IgG effector functions on natural killer (NK) cells. Binds antigen-IgG complexes generated upon infection and triggers NK cell-dependent cytokine production and degranulation to limit viral load and propagation. Fc-binding subunit that associates with FCER1G adapter to form functional signaling complexes. Following the engagement of antigen-IgG complexes, triggers phosphorylation of immunoreceptor tyrosine-based activation motif (ITAM)-containing adapter with subsequent activation of phosphatidylinositol 3-kinase signaling and sustained elevation of intracellular calcium that ultimately drive NK cell activation. Mediates enhanced ADCC in response to afucosylated IgGs. The sequence is that of Low affinity immunoglobulin gamma Fc region receptor III-A from Felis catus (Cat).